We begin with the raw amino-acid sequence, 536 residues long: ATPase expression protein 3 (536 aa).

PPR repeat units follow at residues 212–246 (TTTM…KKTP) and 386–421 (TTGS…GVTP).

It is found in the mitochondrion inner membrane. Required for respiration. The chain is ATPase expression protein 3 (AEP3) from Eremothecium gossypii (strain ATCC 10895 / CBS 109.51 / FGSC 9923 / NRRL Y-1056) (Yeast).